The chain runs to 381 residues: Creatine kinase M-type (381 aa).

Positions 11–98 (KLNYSAAEEF…FDPVIEDRHG (88 aa)) constitute a Phosphagen kinase N-terminal domain. Residues 125–367 (YVLSSRVRTG…KLMVEMEKRL (243 aa)) enclose the Phosphagen kinase C-terminal domain. Residues 128–132 (SSRVR), H191, R236, R292, 320–325 (RGTGGV), and D335 contribute to the ATP site.

This sequence belongs to the ATP:guanido phosphotransferase family. Dimer of identical or non-identical chains. With MM being the major form in skeletal muscle and myocardium, MB existing in myocardium, and BB existing in many tissues, especially brain.

It is found in the cytoplasm. It catalyses the reaction creatine + ATP = N-phosphocreatine + ADP + H(+). In terms of biological role, reversibly catalyzes the transfer of phosphate between ATP and various phosphogens (e.g. creatine phosphate). Creatine kinase isoenzymes play a central role in energy transduction in tissues with large, fluctuating energy demands, such as skeletal muscle, heart, brain and spermatozoa. The polypeptide is Creatine kinase M-type (Torpedo marmorata (Marbled electric ray)).